The following is a 49-amino-acid chain: Small, acid-soluble spore protein O (49 aa).

The interval 1–49 (MGKRKANHIVPGMNAASAQGQGTGYNEEFANEPLTAAQRQNNKKRKKNQ) is disordered.

The protein belongs to the SspO family.

Its subcellular location is the spore core. This chain is Small, acid-soluble spore protein O, found in Bacillus cytotoxicus (strain DSM 22905 / CIP 110041 / 391-98 / NVH 391-98).